A 469-amino-acid polypeptide reads, in one-letter code: MAIYITNTESGKKEKLVPNTPGVVKMYVCGPTVYNYIHIGNARPAVVFDAFRRFLEYRGYKVVMVQNFTDIDDKIINEANAWGVNFKDVADTFIAEYWKDAENLGIRAANFHPRTTDYVKEIVEAVEKLIAKNYAYVADNGDVYFSVKEFKDYGKLSGKKLEDLVAGARVEVSELKKNPLDFALWKAVKPGEPSWDSPWGNGRPGWHIECSVMSQRLLGDSFDIHAGGEDLIFPHHEDEKAQSEALTGKPFAKYWMHNGMIITRGDKMSKSIGNVFLVREAVKRYGKDAVKLFLLSKHYRTPIEFSHEIMFNTKKAALRILNTLNRFEEKYPYPLVPKRDTFMNDMEARFVEALEDDFNTPRVIALIFELSKDLNKAMDEGKEEEALKRYHLITRVFGSVLGIFERGLKVVETNNQKIIEEILSVRQELRKEKDYNVADKIRDALLRAGVKILDTSEGTKWEMNTEVDE.

Cysteine 29 provides a ligand contact to Zn(2+). Positions 31 to 41 match the 'HIGH' region motif; sequence PTVYNYIHIGN. Zn(2+)-binding residues include cysteine 210, histidine 235, and glutamate 239. The 'KMSKS' region motif lies at 267-271; the sequence is KMSKS. Lysine 270 contacts ATP.

It belongs to the class-I aminoacyl-tRNA synthetase family. As to quaternary structure, monomer. Requires Zn(2+) as cofactor.

It is found in the cytoplasm. It catalyses the reaction tRNA(Cys) + L-cysteine + ATP = L-cysteinyl-tRNA(Cys) + AMP + diphosphate. This Thermosipho melanesiensis (strain DSM 12029 / CIP 104789 / BI429) protein is Cysteine--tRNA ligase.